A 146-amino-acid chain; its full sequence is MPGRAPGSTLARVGSIPAGDDVLDPDEPTYDLPRVAELLGVPVSKVAQQLREGHLVAVRRAGGVVIPQVFFTNSGQVVKSLPGLLTILHDGGYRDTEIMRWLFTPDPSLTITRDGSRDAVSNARPVDALHAHQAREVVRRAQAMAY.

Positions 1-27 (MPGRAPGSTLARVGSIPAGDDVLDPDE) are disordered. The residue at position 9 (Thr9) is a Phosphothreonine.

In terms of assembly, monomer in solution. May form homodimers. Interacts with phosphorylated PknL. Post-translationally, phosphorylated by PknL. Phosphorylation negatively regulates DNA-binding activity.

Binds DNA at low salt concentrations. In Mycobacterium tuberculosis (strain ATCC 25618 / H37Rv), this protein is DNA-binding protein Rv2175c.